Consider the following 184-residue polypeptide: Small ribosomal subunit protein eS8 (184 aa).

Residues 1-23 (MGISRDSRHKRRLTGGRYPVHKK) are disordered. Residues 7-23 (SRHKRRLTGGRYPVHKK) show a composition bias toward basic residues.

It belongs to the eukaryotic ribosomal protein eS8 family.

This is Small ribosomal subunit protein eS8 (RPS8) from Theileria annulata.